The sequence spans 262 residues: Nodulation protein J (262 aa).

The 227-residue stretch at 33–259 (ASLLGHLAEP…FLSTALLRRR (227 aa)) folds into the ABC transmembrane type-2 domain. 6 helical membrane passes run 35–55 (LLGH…GLGV), 60–80 (VGGV…SAMT), 125–145 (AALA…TQWL), 148–168 (LYAL…GMVV), 177–197 (YFIF…GAVF), and 231–251 (VVDV…PFFL).

This sequence belongs to the ABC-2 integral membrane protein family. Lipooligosaccharide exporter (TC 3.A.1.102) subfamily. In terms of assembly, the complex is composed of two ATP-binding proteins (NodI) and two transmembrane proteins (NodJ).

Its subcellular location is the cell inner membrane. Its function is as follows. Part of the ABC transporter complex NodIJ involved in the export of the nodulation factors (Nod factors), the bacterial signal molecules that induce symbiosis and subsequent nodulation induction. Nod factors are LCO (lipo-chitin oligosaccharide), a modified beta-1,4-linked N-acetylglucosamine oligosaccharide. This subunit encodes the transporter. This is Nodulation protein J (nodJ) from Rhizobium leguminosarum bv. trifolii.